The chain runs to 201 residues: Recombination protein RecR (201 aa).

The C4-type zinc-finger motif lies at 57–72 (CADCRTFTEQEVCNIC). Positions 81–176 (GQICVVESPA…DASRIAHGVP (96 aa)) constitute a Toprim domain.

It belongs to the RecR family.

Its function is as follows. May play a role in DNA repair. It seems to be involved in an RecBC-independent recombinational process of DNA repair. It may act with RecF and RecO. The chain is Recombination protein RecR from Klebsiella pneumoniae subsp. pneumoniae (strain ATCC 700721 / MGH 78578).